The sequence spans 622 residues: MNKLTFHNNKAMQDRRRVCIFLPNDKSVSIIINVKILCHQLLVQVCDLLRLKDSHLFGLSVIQNNEHVYMELSQKLYKYCPKEWKKEASKVRQYEVTWGIDQFGPPMIIHFRVQYYVENGKLISDRIARYYYYWHLRKQVLHSQCVLREEAYFLLAAFALQADLGNFKRKLHHGDYFEPEAYFPAWVVSKRGKDYILKHIPNMHKDQFALTASEAYLKYIKEAVRLDDVAIHYYRLYKDKREAEGSLTLGLTMRGIQIFQNLEEEKQLLYDFPWTNVGKLVFVGKKFEILPDGLPSARKLVYYTGCPTRSRHLLQLLSNSHRLYMNLQPVLRHLRKQEENEEKKQYRESYISDNLDLDMDPLEKRSRASGSSAGSVKHKRLSRHSTASHSSSHTSGIEADTKPRDPGPEDSCSGSAMHRKLKTCSSMTSHGSSHTSGVESGGKDRLEEDSQDEEIEMLVDDPRDLEPMPEESLEVSPEMCIYITEDMLLSRKLNGHSGLIVKEIGSSTSSSSETVVRLRGQSTDSLPQTICRKPKTSTDRHSLSLDDIRLYQKDFLRIAGLCQDTAQSYTFGCGHELDESGLYCNSCLAQQCVNIQDAFPVKRASKYFSLDLTHDEVPEFVV.

The FERM domain occupies 16-328 (RRVCIFLPND…NSHRLYMNLQ (313 aa)). Positions 357-452 (LDMDPLEKRS…KDRLEEDSQD (96 aa)) are disordered. 2 stretches are compositionally biased toward low complexity: residues 384 to 395 (HSTASHSSSHTS) and 425 to 438 (SSMT…TSGV). Position 522 is a phosphoserine (Ser-522). Thr-523 carries the post-translational modification Phosphothreonine. Ser-525, Ser-542, and Ser-544 each carry phosphoserine.

It localises to the cytoplasm. The protein localises to the cell membrane. This is FERM domain-containing protein 6 (Frmd6) from Mus musculus (Mouse).